The sequence spans 162 residues: Cytochrome c-type biogenesis protein CcmE (162 aa).

Residues 1-8 are Cytoplasmic-facing; that stretch reads MNPRRKKR. A helical; Signal-anchor for type II membrane protein membrane pass occupies residues 9–29; sequence LTLAVALIGGVAAIASLLLYA. Residues 30-162 are Periplasmic-facing; sequence LNSNLNLFYT…YSQQKAPDTK (133 aa). Residues His-131 and Tyr-135 each coordinate heme. Residues 139-162 are disordered; the sequence is EVAEAMGQKHEKLDYSQQKAPDTK. Residues 153–162 are compositionally biased toward polar residues; that stretch reads YSQQKAPDTK.

This sequence belongs to the CcmE/CycJ family.

It localises to the cell inner membrane. In terms of biological role, heme chaperone required for the biogenesis of c-type cytochromes. Transiently binds heme delivered by CcmC and transfers the heme to apo-cytochromes in a process facilitated by CcmF and CcmH. The chain is Cytochrome c-type biogenesis protein CcmE from Shewanella putrefaciens (strain CN-32 / ATCC BAA-453).